We begin with the raw amino-acid sequence, 256 residues long: Triosephosphate isomerase (256 aa).

Substrate is bound at residue 12–14 (NWK). H99 serves as the catalytic Electrophile. E169 functions as the Proton acceptor in the catalytic mechanism. Residues G175, S214, and 235 to 236 (GG) each bind substrate.

The protein belongs to the triosephosphate isomerase family. As to quaternary structure, homodimer.

Its subcellular location is the cytoplasm. The enzyme catalyses D-glyceraldehyde 3-phosphate = dihydroxyacetone phosphate. It participates in carbohydrate biosynthesis; gluconeogenesis. The protein operates within carbohydrate degradation; glycolysis; D-glyceraldehyde 3-phosphate from glycerone phosphate: step 1/1. Its function is as follows. Involved in the gluconeogenesis. Catalyzes stereospecifically the conversion of dihydroxyacetone phosphate (DHAP) to D-glyceraldehyde-3-phosphate (G3P). This is Triosephosphate isomerase from Rhizobium etli (strain ATCC 51251 / DSM 11541 / JCM 21823 / NBRC 15573 / CFN 42).